A 154-amino-acid chain; its full sequence is S-ribosylhomocysteine lyase (154 aa).

Fe cation is bound by residues H58, H62, and C125.

The protein belongs to the LuxS family. Homodimer. Requires Fe cation as cofactor.

It carries out the reaction S-(5-deoxy-D-ribos-5-yl)-L-homocysteine = (S)-4,5-dihydroxypentane-2,3-dione + L-homocysteine. Involved in the synthesis of autoinducer 2 (AI-2) which is secreted by bacteria and is used to communicate both the cell density and the metabolic potential of the environment. The regulation of gene expression in response to changes in cell density is called quorum sensing. Catalyzes the transformation of S-ribosylhomocysteine (RHC) to homocysteine (HC) and 4,5-dihydroxy-2,3-pentadione (DPD). This is S-ribosylhomocysteine lyase from Dichelobacter nodosus (strain VCS1703A).